The chain runs to 392 residues: CCA-adding enzyme (392 aa).

2 residues coordinate ATP: Ser45 and Lys48. CTP is bound by residues Ser45 and Lys48. Residues Asp55, Asp57, and Glu106 each coordinate Mg(2+). ATP is bound by residues His129, Lys148, and Tyr157. The CTP site is built by His129, Lys148, and Tyr157.

The protein belongs to the tRNA nucleotidyltransferase/poly(A) polymerase family. Archaeal CCA-adding enzyme subfamily. As to quaternary structure, homodimer. Requires Mg(2+) as cofactor.

The catalysed reaction is a tRNA precursor + 2 CTP + ATP = a tRNA with a 3' CCA end + 3 diphosphate. It catalyses the reaction a tRNA with a 3' CCA end + 2 CTP + ATP = a tRNA with a 3' CCACCA end + 3 diphosphate. In terms of biological role, catalyzes the addition and repair of the essential 3'-terminal CCA sequence in tRNAs without using a nucleic acid template. Adds these three nucleotides in the order of C, C, and A to the tRNA nucleotide-73, using CTP and ATP as substrates and producing inorganic pyrophosphate. tRNA 3'-terminal CCA addition is required both for tRNA processing and repair. Also involved in tRNA surveillance by mediating tandem CCA addition to generate a CCACCA at the 3' terminus of unstable tRNAs. While stable tRNAs receive only 3'-terminal CCA, unstable tRNAs are marked with CCACCA and rapidly degraded. In Nanoarchaeum equitans (strain Kin4-M), this protein is CCA-adding enzyme.